The sequence spans 309 residues: Uracil phosphoribosyltransferase homolog (309 aa).

A disordered region spans residues 1–41; that stretch reads MATELQCPDSMPCHNQQVNSASTPSPEQLRPGDPILDHAGG. Positions 13-26 are enriched in polar residues; the sequence is CHNQQVNSASTPSP. At Ser25 the chain carries Phosphoserine. GTP-binding positions include Arg133, Arg142, and 176 to 179; that span reads EKGN. Arg186 contacts 5-phospho-alpha-D-ribose 1-diphosphate. Residues Arg203 and Arg232 each coordinate GTP. 238–246 contacts 5-phospho-alpha-D-ribose 1-diphosphate; the sequence is YPILSTGNT. 299–301 contacts uracil; the sequence is THF.

It belongs to the UPRTase family.

It localises to the cytoplasm. Its subcellular location is the nucleus. This is Uracil phosphoribosyltransferase homolog (UPRT) from Macaca fascicularis (Crab-eating macaque).